Here is a 615-residue protein sequence, read N- to C-terminus: 1-deoxy-D-xylulose-5-phosphate synthase (615 aa).

Residues histidine 72 and 111-113 (GHS) each bind thiamine diphosphate. Residue aspartate 142 coordinates Mg(2+). Residues 143 to 144 (GA), asparagine 171, tyrosine 278, and glutamate 360 contribute to the thiamine diphosphate site. Mg(2+) is bound at residue asparagine 171.

The protein belongs to the transketolase family. DXPS subfamily. In terms of assembly, homodimer. The cofactor is Mg(2+). Requires thiamine diphosphate as cofactor.

The catalysed reaction is D-glyceraldehyde 3-phosphate + pyruvate + H(+) = 1-deoxy-D-xylulose 5-phosphate + CO2. It participates in metabolic intermediate biosynthesis; 1-deoxy-D-xylulose 5-phosphate biosynthesis; 1-deoxy-D-xylulose 5-phosphate from D-glyceraldehyde 3-phosphate and pyruvate: step 1/1. Catalyzes the acyloin condensation reaction between C atoms 2 and 3 of pyruvate and glyceraldehyde 3-phosphate to yield 1-deoxy-D-xylulose-5-phosphate (DXP). This chain is 1-deoxy-D-xylulose-5-phosphate synthase, found in Campylobacter jejuni subsp. doylei (strain ATCC BAA-1458 / RM4099 / 269.97).